The primary structure comprises 534 residues: UDP-glucuronosyltransferase 1A5 (534 aa).

Residues 1–28 form the signal peptide; it reads MATGLQVPLPQLATGLLLLLSVQPWAES. N-linked (GlcNAc...) asparagine glycosylation is found at asparagine 119, asparagine 296, and asparagine 348. Residues 492–508 form a helical membrane-spanning segment; the sequence is VIGFLLAVVLTVAFITF.

It belongs to the UDP-glycosyltransferase family. In terms of assembly, homodimer. Homooligomer. Interacts with UGT1A1, UGT1A3, UGT1A4, UGT1A6, UGT1A7, UGT1A8, UGT1A9 and UGT1A10 to form heterodimers. Isoform 1 interacts with isoform 2/i2 suggesting that oligomerization is involved in negative regulation of transferase activity by isoform 2. Isoform 1 also interacts with respective i2 isoforms of UGT1A1, UGT1A3, UGT1A4, UGT1A6, UGT1A7, UGT1A8, UGT1A9 and UGT1A10. Isoform 1 and isoform 2 are expressed in colon and small intestine. Neither isoform is expressed in liver, kidney or esophagus.

Its subcellular location is the endoplasmic reticulum membrane. The catalysed reaction is glucuronate acceptor + UDP-alpha-D-glucuronate = acceptor beta-D-glucuronoside + UDP + H(+). It carries out the reaction zolasartan + UDP-alpha-D-glucuronate = zolarsartan-1-N-beta-D-glucuronide + UDP. UDP-glucuronosyltransferase (UGT) that catalyzes phase II biotransformation reactions in which lipophilic substrates are conjugated with glucuronic acid to increase the metabolite's water solubility, thereby facilitating excretion into either the urine or bile. Essential for the elimination and detoxification of drugs, xenobiotics and endogenous compounds. Involved in the glucuronidation of the AGTR1 angiotensin receptor antagonist zolarsatan, a drug which can inhibit the effect of angiotensin II. Its function is as follows. Lacks UGT glucuronidation activity but acts as a negative regulator of isoform 1. The sequence is that of UDP-glucuronosyltransferase 1A5 from Homo sapiens (Human).